A 607-amino-acid polypeptide reads, in one-letter code: UvrABC system protein C (607 aa).

One can recognise a GIY-YIG domain in the interval 11-89 (CKPGVYRFED…IKEFAPPCNV (79 aa)). The 36-residue stretch at 201 to 236 (SSLLESLKKKMLKASKNKEYEEAAILRDKIQAAQTV) folds into the UVR domain.

Belongs to the UvrC family. Interacts with UvrB in an incision complex.

It is found in the cytoplasm. Functionally, the UvrABC repair system catalyzes the recognition and processing of DNA lesions. UvrC both incises the 5' and 3' sides of the lesion. The N-terminal half is responsible for the 3' incision and the C-terminal half is responsible for the 5' incision. This Tropheryma whipplei (strain TW08/27) (Whipple's bacillus) protein is UvrABC system protein C.